The chain runs to 327 residues: uncharacterized protein (327 aa).

Over residues 1–17 (MASMAAAIAASRSAVMS) the composition is skewed to low complexity. Residues 1 to 22 (MASMAAAIAASRSAVMSGNRPL) are disordered. N-acetylalanine is present on Ala2. Ser37 carries the post-translational modification Phosphoserine. The interval 76 to 113 (GPRAPAPRDPGDSEELTRFPGLRGPTGQKVVRFGDEDL) is disordered. Ser129 carries the post-translational modification Phosphoserine. Residues 134 to 148 (SISALSIQEPSNGTA) show a composition bias toward polar residues. Residues 134-299 (SISALSIQEP…PDVRQDDGED (166 aa)) form a disordered region. The segment covering 162-176 (SQALKSSQGSRSSSL) has biased composition (low complexity). Ser175 is subject to Phosphoserine. Composition is skewed to basic and acidic residues over residues 182-202 (TRKE…RGEG) and 233-252 (PAPK…RQEQ). Residue Ser289 is modified to Phosphoserine.

It localises to the cytoplasm. This is an uncharacterized protein from Homo sapiens (Human).